A 422-amino-acid chain; its full sequence is Beta-1,3-galactosyltransferase 2 (422 aa).

At 1 to 20 (MLQWRRRHCCFAKMTWSPKR) the chain is on the cytoplasmic side. A helical; Signal-anchor for type II membrane protein transmembrane segment spans residues 21 to 43 (SLLRTPLTGVLSLVFLFAMFLFF). Over 44–422 (NHHDWLPGRP…AGRYRHRKLH (379 aa)) the chain is Lumenal. Asn-75, Asn-98, Asn-119, Asn-176, and Asn-226 each carry an N-linked (GlcNAc...) asparagine glycan. The tract at residues 91–110 (LRPHTASNSSNTELSPQGVT) is disordered. Polar residues predominate over residues 95–110 (TASNSSNTELSPQGVT).

Belongs to the glycosyltransferase 31 family. Requires Mn(2+) as cofactor. In terms of tissue distribution, detected in brain and heart.

It localises to the golgi apparatus membrane. The catalysed reaction is an N-acetyl-beta-D-glucosaminyl derivative + UDP-alpha-D-galactose = a beta-D-galactosyl-(1-&gt;3)-N-acetyl-beta-D-glucosaminyl derivative + UDP + H(+). It catalyses the reaction a beta-D-GlcNAc-(1-&gt;3)-beta-D-Gal-(1-&gt;4)-beta-D-Glc-(1&lt;-&gt;1)-Cer(d18:1(4E)) + UDP-alpha-D-galactose = a beta-D-Gal-(1-&gt;3)-beta-D-GlcNAc-(1-&gt;3)-beta-D-Gal-(1-&gt;4)-beta-D-Glc-(1&lt;-&gt;1')-Cer(d18:1(4E)) + UDP + H(+). The enzyme catalyses a neolactoside IV(3)-beta-GlcNAc-nLc4Cer(d18:1(4E)) + UDP-alpha-D-galactose = a neolactoside IV(3)-beta-[Gal-beta-(1-&gt;3)-GlcNAc]-nLc4Cer(d18:1(4E)) + UDP + H(+). It participates in protein modification; protein glycosylation. Functionally, beta-1,3-galactosyltransferase that transfers galactose from UDP-galactose to substrates with a terminal beta-N-acetylglucosamine (beta-GlcNAc) residue. Can also utilize substrates with a terminal galactose residue, albeit with lower efficiency. Involved in the biosynthesis of the carbohydrate moieties of glycolipids and glycoproteins. In Mus musculus (Mouse), this protein is Beta-1,3-galactosyltransferase 2.